Reading from the N-terminus, the 121-residue chain is Spermidine export protein MdtJ (121 aa).

A run of 4 helical transmembrane segments spans residues 1–21, 32–52, 55–75, and 82–102; these read MYIY…GTLS, GGFI…SFAV, IALG…ITLF, and ESLS…IVLI.

The protein belongs to the drug/metabolite transporter (DMT) superfamily. Small multidrug resistance (SMR) (TC 2.A.7.1) family. MdtJ subfamily. Forms a complex with MdtI.

The protein localises to the cell inner membrane. Functionally, catalyzes the excretion of spermidine. The sequence is that of Spermidine export protein MdtJ from Escherichia coli O127:H6 (strain E2348/69 / EPEC).